The chain runs to 359 residues: NADH-quinone oxidoreductase subunit H (359 aa).

Transmembrane regions (helical) follow at residues 19–39 (IGWFPLGLVIVAAIPLVFIAL), 94–114 (FLFVIGPGILFVGSFLAFAVL), 127–147 (VGLFYAVGIVAIEVVGILAAG), 175–195 (IALLCAAMLAGTLSMQQIILM), 202–222 (FLHWFLFTNPIAWLPFLIYFI), 255–275 (FAVIFLAEYGSMFMVSAIISI), 301–321 (VWGAFWIIMKGFFFIFVQMWL), and 337–357 (CWKVLTPFSLVSFVLTAIWVI).

The protein belongs to the complex I subunit 1 family. As to quaternary structure, NDH-1 is composed of 14 different subunits. Subunits NuoA, H, J, K, L, M, N constitute the membrane sector of the complex.

The protein resides in the cell inner membrane. It catalyses the reaction a quinone + NADH + 5 H(+)(in) = a quinol + NAD(+) + 4 H(+)(out). Its function is as follows. NDH-1 shuttles electrons from NADH, via FMN and iron-sulfur (Fe-S) centers, to quinones in the respiratory chain. The immediate electron acceptor for the enzyme in this species is believed to be ubiquinone. Couples the redox reaction to proton translocation (for every two electrons transferred, four hydrogen ions are translocated across the cytoplasmic membrane), and thus conserves the redox energy in a proton gradient. This subunit may bind ubiquinone. The polypeptide is NADH-quinone oxidoreductase subunit H (Chlorobaculum tepidum (strain ATCC 49652 / DSM 12025 / NBRC 103806 / TLS) (Chlorobium tepidum)).